The following is a 533-amino-acid chain: Retinoic acid receptor RXR-beta (533 aa).

A disordered region spans residues methionine 1–valine 24. The interval methionine 1 to leucine 204 is modulating. Arginine 25 bears the Omega-N-methylarginine mark. The tract at residues arginine 37–valine 183 is disordered. Residues alanine 46 to proline 61 show a composition bias toward low complexity. Residues glutamate 67–serine 82 show a composition bias toward basic and acidic residues. A compositionally biased stretch (low complexity) spans proline 83–glycine 94. Composition is skewed to pro residues over residues alanine 95–serine 109 and alanine 118–leucine 129. The span at glycine 130–proline 143 shows a compositional bias: low complexity. Residues glycine 144–phenylalanine 153 are compositionally biased toward pro residues. 2 consecutive NR C4-type zinc fingers follow at residues cysteine 205–cysteine 225 and cysteine 241–cysteine 265. The nuclear receptor DNA-binding region spans cysteine 205–methionine 270. The tract at residues lysine 271–alanine 295 is hinge. A compositionally biased stretch (basic and acidic residues) spans glutamine 276–aspartate 288. 2 disordered regions span residues glutamine 276–methionine 299 and glutamine 313–valine 336. Residues proline 296–proline 529 enclose the NR LBD domain. The segment covering glutamate 320–glycine 329 has biased composition (gly residues).

This sequence belongs to the nuclear hormone receptor family. NR2 subfamily. In terms of assembly, homodimer (in vitro). Heterodimer with other retinoic acid receptor family members. Binds DNA preferentially as a RAR/RXR heterodimer. Interacts with NR1H3. Interacts with AKAP13.

The protein resides in the nucleus. It localises to the cytoplasm. Receptor for retinoic acid. Retinoic acid receptors bind as heterodimers to their target response elements in response to their ligands, all-trans or 9-cis retinoic acid, and regulate gene expression in various biological processes. The RAR/RXR heterodimers bind to the retinoic acid response elements (RARE). The sequence is that of Retinoic acid receptor RXR-beta (RXRB) from Canis lupus familiaris (Dog).